An 83-amino-acid polypeptide reads, in one-letter code: Exodeoxyribonuclease 7 small subunit (83 aa).

Belongs to the XseB family. As to quaternary structure, heterooligomer composed of large and small subunits.

The protein resides in the cytoplasm. It carries out the reaction Exonucleolytic cleavage in either 5'- to 3'- or 3'- to 5'-direction to yield nucleoside 5'-phosphates.. Bidirectionally degrades single-stranded DNA into large acid-insoluble oligonucleotides, which are then degraded further into small acid-soluble oligonucleotides. The protein is Exodeoxyribonuclease 7 small subunit of Sinorhizobium medicae (strain WSM419) (Ensifer medicae).